We begin with the raw amino-acid sequence, 262 residues long: Shikimate dehydrogenase (NADP(+)) (262 aa).

Residues 14-16 (SAS) and Thr-60 contribute to the shikimate site. Lys-64 serves as the catalytic Proton acceptor. Shikimate is bound by residues Asn-85 and Asp-100. NADP(+) contacts are provided by residues 121-125 (GAGGA), 145-150 (NRTAER), and Phe-203. Tyr-205 serves as a coordination point for shikimate. NADP(+) is bound at residue Gly-227.

This sequence belongs to the shikimate dehydrogenase family. Homodimer.

The enzyme catalyses shikimate + NADP(+) = 3-dehydroshikimate + NADPH + H(+). Its pathway is metabolic intermediate biosynthesis; chorismate biosynthesis; chorismate from D-erythrose 4-phosphate and phosphoenolpyruvate: step 4/7. Involved in the biosynthesis of the chorismate, which leads to the biosynthesis of aromatic amino acids. Catalyzes the reversible NADPH linked reduction of 3-dehydroshikimate (DHSA) to yield shikimate (SA). In Pyrobaculum aerophilum (strain ATCC 51768 / DSM 7523 / JCM 9630 / CIP 104966 / NBRC 100827 / IM2), this protein is Shikimate dehydrogenase (NADP(+)).